A 97-amino-acid chain; its full sequence is Prophage lipoprotein Bor homolog (97 aa).

A signal peptide spans 1–16; it reads MKKMLLATALALLITG. A lipid anchor (N-palmitoyl cysteine) is attached at Cys17. Cys17 carries the S-diacylglycerol cysteine lipid modification.

Belongs to the lambda phage bor family.

The protein resides in the cell membrane. The sequence is that of Prophage lipoprotein Bor homolog (borD) from Escherichia coli (strain K12).